We begin with the raw amino-acid sequence, 134 residues long: Thyrotropin subunit beta (134 aa).

Residues 1–16 form the signal peptide; the sequence is MSPFFMMSLLFGLTFG. Disulfide bonds link Cys22/Cys72, Cys36/Cys87, Cys39/Cys125, Cys47/Cys103, Cys51/Cys105, and Cys108/Cys115. Residue Asn43 is glycosylated (N-linked (GlcNAc...) asparagine).

Belongs to the glycoprotein hormones subunit beta family. In terms of assembly, heterodimer of a common alpha chain and a unique beta chain which confers biological specificity to thyrotropin, lutropin, follitropin and gonadotropin.

It is found in the secreted. Its function is as follows. Indispensable for the control of thyroid structure and metabolism. This Gallus gallus (Chicken) protein is Thyrotropin subunit beta (TSHB).